Reading from the N-terminus, the 545-residue chain is Chaperonin GroEL 1 (545 aa).

ATP contacts are provided by residues 30 to 33, Lys51, 87 to 91, Gly415, and Asp495; these read TLGP and DGTTT.

Belongs to the chaperonin (HSP60) family. Forms a cylinder of 14 subunits composed of two heptameric rings stacked back-to-back. Interacts with the co-chaperonin GroES.

Its subcellular location is the cytoplasm. The catalysed reaction is ATP + H2O + a folded polypeptide = ADP + phosphate + an unfolded polypeptide.. In terms of biological role, together with its co-chaperonin GroES, plays an essential role in assisting protein folding. The GroEL-GroES system forms a nano-cage that allows encapsulation of the non-native substrate proteins and provides a physical environment optimized to promote and accelerate protein folding. The protein is Chaperonin GroEL 1 of Rhizobium etli (strain ATCC 51251 / DSM 11541 / JCM 21823 / NBRC 15573 / CFN 42).